A 208-amino-acid polypeptide reads, in one-letter code: MRIVALEGIDGSGVSTHSRLLHARLAGAGVKSCLWKEPTEGPVGRLIRGFLRSTEGVDSDLMALLFAADRLWGLRLGVVERCGGSPEVLVVDRYKYSSLAYQGVGSGLEWVDAVNRKAPEAEILVYIDVPTEVALRRITARERREVFETPEFLERVKSMYEEVLRLARARGVKVIRVEGVRGGVERGIEDVQGEIAERVFEALGLARA.

A defective ATP-binding region spans residues 8-15 (GIDGSGVS).

Belongs to the thymidylate kinase family.

It catalyses the reaction dTMP + ATP = dTDP + ADP. The sequence is that of Putative thymidylate kinase (tmk) from Aeropyrum pernix (strain ATCC 700893 / DSM 11879 / JCM 9820 / NBRC 100138 / K1).